We begin with the raw amino-acid sequence, 113 residues long: Holo-[acyl-carrier-protein] synthase (113 aa).

Mg(2+) is bound by residues Asp5 and Glu50.

This sequence belongs to the P-Pant transferase superfamily. AcpS family. Mg(2+) is required as a cofactor.

Its subcellular location is the cytoplasm. The catalysed reaction is apo-[ACP] + CoA = holo-[ACP] + adenosine 3',5'-bisphosphate + H(+). In terms of biological role, transfers the 4'-phosphopantetheine moiety from coenzyme A to a Ser of acyl-carrier-protein. This is Holo-[acyl-carrier-protein] synthase from Nautilia profundicola (strain ATCC BAA-1463 / DSM 18972 / AmH).